The following is a 459-amino-acid chain: Zeatin O-glucosyltransferase (459 aa).

His26 acts as the Proton acceptor in catalysis. His26 contributes to the an anthocyanidin binding site. Catalysis depends on Asp125, which acts as the Charge relay. UDP-alpha-D-glucose contacts are provided by Ser148, Ala335, Gln337, His352, Trp355, Asn356, Ser357, Glu360, Asp376, and Gln377.

This sequence belongs to the UDP-glycosyltransferase family.

The catalysed reaction is trans-zeatin + UDP-alpha-D-glucose = O-beta-D-glucosyl-trans-zeatin + UDP + H(+). Its function is as follows. May regulate active versus storage forms of cytokinins, and could have an impact on seed growth. Can also use UDP-xylose to catalyze the formation of O-xylosylzeatin but at much lower affinity. This Phaseolus lunatus (Lima bean) protein is Zeatin O-glucosyltransferase.